The sequence spans 85 residues: ATP synthase subunit c (85 aa).

The next 2 membrane-spanning stretches (helical) occupy residues 10–30 (IAVAIIVGLCALGTAVGFAVL) and 53–73 (FIIAGLLDAVPMIGIVIALLF).

It belongs to the ATPase C chain family. F-type ATPases have 2 components, F(1) - the catalytic core - and F(0) - the membrane proton channel. F(1) has five subunits: alpha(3), beta(3), gamma(1), delta(1), epsilon(1). F(0) has three main subunits: a(1), b(2) and c(10-14). The alpha and beta chains form an alternating ring which encloses part of the gamma chain. F(1) is attached to F(0) by a central stalk formed by the gamma and epsilon chains, while a peripheral stalk is formed by the delta and b chains.

The protein resides in the cell inner membrane. In terms of biological role, f(1)F(0) ATP synthase produces ATP from ADP in the presence of a proton or sodium gradient. F-type ATPases consist of two structural domains, F(1) containing the extramembraneous catalytic core and F(0) containing the membrane proton channel, linked together by a central stalk and a peripheral stalk. During catalysis, ATP synthesis in the catalytic domain of F(1) is coupled via a rotary mechanism of the central stalk subunits to proton translocation. Its function is as follows. Key component of the F(0) channel; it plays a direct role in translocation across the membrane. A homomeric c-ring of between 10-14 subunits forms the central stalk rotor element with the F(1) delta and epsilon subunits. The protein is ATP synthase subunit c of Vibrio vulnificus (strain CMCP6).